The chain runs to 584 residues: MGKKKNNSSNAAHVLESSVAPILELNFTDPLFTTAAHPTKPLLISGFATGHLYCNSYNGEKLEELEQVNREKAIERQQKAYEAGTITHVNKSVSQLKSKWWTTFNDIKDVPSKGEELVNVQTNWKTKRHKGSCRHAIFDPRTDCLGDYLYTCGTDNIIKKAATETGKVVGKVDVVADYSSAKDKLTKLCHSTTHPFLLSGTEDGHVLVYDSSNLGGTNKIKFKVELAHDDSINHILSMPAVSPYHYLTLGSTTLSHIDIRKGIITQSDDQEDELLAMSYTTDELSENKNDTVLVSHGEGIITIWKNSKNKLADQLTRIKVNKTASIDAIVPTMNNDDENGMASSVWCGDSEGLLHRVNYKRGRVVETRLHSVARGKSDAVDEVGVLDIDYDYRLISAGMDSLKIWSNRYSDDQEEEEEEEEEEEEEEDSVSGTDSGSDEESFSDISSVDFDSENNDDGEELLDKEQWEDVEDEDIPVGTDGSTRNEENKDNTKSEYILPFKRKRRDFSEVITKPKKKLIDINKLTKPSKKEDDGDDNNKSLQEQEKAEEVPQFKKQKVKEKKVTAKQLRNMQKHEHGIRKFEGL.

4 WD repeats span residues 128–173 (RHKG…GKVD), 180–219 (SAKD…GTNK), 269–314 (DQED…LADQ), and 378–415 (DAVD…DQEE). Disordered stretches follow at residues 409–497 (YSDD…SEYI) and 516–563 (KKLI…EKKV). Composition is skewed to acidic residues over residues 412–429 (DQEE…EEDS) and 450–460 (FDSENNDDGEE). Basic and acidic residues-rich tracts occupy residues 483–493 (TRNEENKDNTK) and 528–552 (SKKE…EVPQ).

This sequence belongs to the WD repeat WDR55 family.

It localises to the nucleus. The protein localises to the nucleolus. This Lodderomyces elongisporus (strain ATCC 11503 / CBS 2605 / JCM 1781 / NBRC 1676 / NRRL YB-4239) (Yeast) protein is WD repeat-containing protein JIP5 (JIP5).